We begin with the raw amino-acid sequence, 408 residues long: LL-diaminopimelate aminotransferase (408 aa).

Tyr-15 and Gly-42 together coordinate substrate. Pyridoxal 5'-phosphate is bound by residues Tyr-72, 108–109 (SK), Tyr-132, Asn-187, Tyr-218, and 246–248 (SFS). Residues Lys-109, Tyr-132, and Asn-187 each contribute to the substrate site. Lys-249 carries the post-translational modification N6-(pyridoxal phosphate)lysine. Positions 257 and 292 each coordinate pyridoxal 5'-phosphate. 2 residues coordinate substrate: Asn-292 and Arg-388.

It belongs to the class-I pyridoxal-phosphate-dependent aminotransferase family. LL-diaminopimelate aminotransferase subfamily. Homodimer. Requires pyridoxal 5'-phosphate as cofactor.

The enzyme catalyses (2S,6S)-2,6-diaminopimelate + 2-oxoglutarate = (S)-2,3,4,5-tetrahydrodipicolinate + L-glutamate + H2O + H(+). It functions in the pathway amino-acid biosynthesis; L-lysine biosynthesis via DAP pathway; LL-2,6-diaminopimelate from (S)-tetrahydrodipicolinate (aminotransferase route): step 1/1. Its function is as follows. Involved in the synthesis of meso-diaminopimelate (m-DAP or DL-DAP), required for both lysine and peptidoglycan biosynthesis. Catalyzes the direct conversion of tetrahydrodipicolinate to LL-diaminopimelate. This Prochlorococcus marinus (strain SARG / CCMP1375 / SS120) protein is LL-diaminopimelate aminotransferase.